Reading from the N-terminus, the 213-residue chain is Glycerol-3-phosphate acyltransferase (213 aa).

Transmembrane regions (helical) follow at residues 3–23 (IIILLLIASYLLGAIPFGLWI), 48–68 (ILGVKAGIAVFIFDLLKGTLA), 71–91 (LPLIFHINGVSPLIFGLLAVI), 119–139 (PFFLLYLLVIFILVLWLFSMI), 144–164 (VVAAIFALLGILIFPSFGFIL), and 165–185 (TSYDLLFSIIIFALAIIIIFR).

The protein belongs to the PlsY family. Probably interacts with PlsX.

Its subcellular location is the cell membrane. It catalyses the reaction an acyl phosphate + sn-glycerol 3-phosphate = a 1-acyl-sn-glycero-3-phosphate + phosphate. It functions in the pathway lipid metabolism; phospholipid metabolism. Functionally, catalyzes the transfer of an acyl group from acyl-phosphate (acyl-PO(4)) to glycerol-3-phosphate (G3P) to form lysophosphatidic acid (LPA). This enzyme utilizes acyl-phosphate as fatty acyl donor, but not acyl-CoA or acyl-ACP. This Lactococcus lactis subsp. cremoris (strain SK11) protein is Glycerol-3-phosphate acyltransferase.